The sequence spans 158 residues: Succinate dehydrogenase assembly factor 2, mitochondrial (158 aa).

Residues 1 to 23 (MLRQLLATARRLLLPLATPKRCL) constitute a mitochondrion transit peptide.

The protein belongs to the SDHAF2 family. Interacts with the flavoprotein subunit within the SDH catalytic dimer.

It is found in the mitochondrion matrix. Its function is as follows. Plays an essential role in the assembly of succinate dehydrogenase (SDH), an enzyme complex (also referred to as respiratory complex II) that is a component of both the tricarboxylic acid (TCA) cycle and the mitochondrial electron transport chain, and which couples the oxidation of succinate to fumarate with the reduction of ubiquinone (coenzyme Q) to ubiquinol. Required for flavinylation (covalent attachment of FAD) of the flavoprotein subunit of the SDH catalytic dimer. This Drosophila virilis (Fruit fly) protein is Succinate dehydrogenase assembly factor 2, mitochondrial.